Here is a 1923-residue protein sequence, read N- to C-terminus: Nuclear pore complex protein GP210 (1923 aa).

The signal sequence occupies residues 1-22; that stretch reads MVPVSFCFFFLLLLLSAGESSS. Residues asparagine 73, asparagine 117, asparagine 289, asparagine 609, asparagine 863, asparagine 903, asparagine 967, asparagine 982, asparagine 1171, asparagine 1199, asparagine 1550, asparagine 1568, and asparagine 1743 are each glycosylated (N-linked (GlcNAc...) asparagine). Positions 1152-1205 constitute a BIG2 domain; the sequence is IFLVPGASYVLTIEGGPTMNVSVDYTTVDNEVAKIEKSGRLYATSPGNTTIYAT. A helical transmembrane segment spans residues 1829 to 1849; it reads SVLLKILWGVLVLVVSVIILM.

This sequence belongs to the NUP210 family. In terms of assembly, part of the nuclear pore complex (NPC). The NPC has an eight-fold symmetrical structure comprising a central transport channel and two rings, the cytoplasmic and nuclear rings, to which eight filaments are attached. The cytoplasmic filaments have loose ends, while the nuclear filaments are joined in a distal ring, forming a nuclear basket. NPCs are highly dynamic in configuration and composition, and can be devided in 3 subcomplexes, the NUP62 subcomplex, the NUP107-160 subcomplex and the NUP93 subcomplex, containing approximately 30 different nucleoporin proteins.

Its subcellular location is the nucleus envelope. The protein resides in the nucleus membrane. It is found in the nucleus. It localises to the nuclear pore complex. The polypeptide is Nuclear pore complex protein GP210 (Arabidopsis thaliana (Mouse-ear cress)).